A 311-amino-acid chain; its full sequence is tRNA-cytidine(32) 2-sulfurtransferase (311 aa).

The short motif at 47 to 52 is the PP-loop motif element; that stretch reads SGGKDS. [4Fe-4S] cluster is bound by residues Cys122, Cys125, and Cys213.

It belongs to the TtcA family. Homodimer. Mg(2+) is required as a cofactor. The cofactor is [4Fe-4S] cluster.

It localises to the cytoplasm. It carries out the reaction cytidine(32) in tRNA + S-sulfanyl-L-cysteinyl-[cysteine desulfurase] + AH2 + ATP = 2-thiocytidine(32) in tRNA + L-cysteinyl-[cysteine desulfurase] + A + AMP + diphosphate + H(+). The protein operates within tRNA modification. Functionally, catalyzes the ATP-dependent 2-thiolation of cytidine in position 32 of tRNA, to form 2-thiocytidine (s(2)C32). The sulfur atoms are provided by the cysteine/cysteine desulfurase (IscS) system. The polypeptide is tRNA-cytidine(32) 2-sulfurtransferase (Salmonella dublin (strain CT_02021853)).